We begin with the raw amino-acid sequence, 24 residues long: Protein YsdE (24 aa).

The sequence is that of Protein YsdE from Escherichia coli (strain K12).